A 363-amino-acid chain; its full sequence is Ribosomal RNA large subunit methyltransferase M (363 aa).

S-adenosyl-L-methionine is bound by residues S190, 223–226 (CPGG), D242, D262, and D279. K308 (proton acceptor) is an active-site residue.

The protein belongs to the class I-like SAM-binding methyltransferase superfamily. RNA methyltransferase RlmE family. RlmM subfamily. Monomer.

It localises to the cytoplasm. It catalyses the reaction cytidine(2498) in 23S rRNA + S-adenosyl-L-methionine = 2'-O-methylcytidine(2498) in 23S rRNA + S-adenosyl-L-homocysteine + H(+). Its function is as follows. Catalyzes the 2'-O-methylation at nucleotide C2498 in 23S rRNA. The sequence is that of Ribosomal RNA large subunit methyltransferase M from Vibrio atlanticus (strain LGP32) (Vibrio splendidus (strain Mel32)).